A 770-amino-acid chain; its full sequence is Arf-GAP with coiled-coil, ANK repeat and PH domain-containing protein 2 (770 aa).

Residues 1–226 form the BAR domain; it reads MKMTVDFEEC…MKDLGAQLDR (226 aa). The region spanning 266-361 is the PH domain; sequence GIVMEGYLFK…WIKAVQTSIA (96 aa). The disordered stretch occupies residues 371–391; it reads SEKLDKKSSPSTGSLDSGNES. The segment covering 379–388 has biased composition (polar residues); it reads SPSTGSLDSG. Ser384 and Ser387 each carry phosphoserine. Residues 399-520 enclose the Arf-GAP domain; that stretch reads ESALQRVQCI…KFVDKYSALL (122 aa). The segment at 414–437 adopts a C4-type zinc-finger fold; sequence CCDCGLADPRWASINLGITLCIEC. Phosphoserine is present on Ser521. The segment at 542–572 is disordered; the sequence is ARASVHTPVKSNDSGIQQCSEDGRESLPSTV. Residues 550 to 561 show a composition bias toward polar residues; that stretch reads VKSNDSGIQQCS. Phosphoserine is present on residues Ser573 and Ser576. 3 ANK repeats span residues 632–661, 665–694, and 698–727; these read NQAT…NVNQ, QGRG…NQHA, and EGKD…NEEM. Tyr734 carries the phosphotyrosine modification. Ser767 bears the Phosphoserine mark.

Interacts with RAB35 (GTP-bound form); the interaction is direct and probably recruits ACAP2 to membranes. Interacts with MICALL1; the interaction is indirect through RAB35.

It localises to the endosome membrane. It is found in the cell membrane. GAP activity stimulated by phosphatidylinositol 4,5-bisphosphate (PIP2) and phosphatidic acid. Its function is as follows. GTPase-activating protein (GAP) for ADP ribosylation factor 6 (ARF6). Doesn't show GAP activity for RAB35. This is Arf-GAP with coiled-coil, ANK repeat and PH domain-containing protein 2 (Acap2) from Mus musculus (Mouse).